The following is a 242-amino-acid chain: VIGGTNASPGEFPWQLSQQRQSGSWSHSCGASLLSSTSALSASHCVDGVLPNNIRVIAGLWQQSDTSGTQTANVDSYTMHENYGAGTASYSNDIAILHLATSISLGGNIQAAVLPANNNNDYAGTTCVISGWGRTDGTNNLPDILQKSSIPVITTAQCTAAMVGVGGANIWDNHICVQDPAGNTGACNGDSGGPLNCPDGGTRVVGVTSWVVSSGLGTCLPDYPSVYTRVSAYLGWIGDNSR.

Residues 1 to 242 (VIGGTNASPG…YLGWIGDNSR (242 aa)) form the Peptidase S1 domain. Cys29 and Cys45 are joined by a disulfide. Active-site charge relay system residues include His44 and Asp93. Intrachain disulfides connect Cys127–Cys197, Cys158–Cys176, and Cys187–Cys219. The active-site Charge relay system is the Ser191.

This sequence belongs to the peptidase S1 family.

In Lumbricus rubellus (Humus earthworm), this protein is Fibrinolytic enzyme, isozyme C.